The primary structure comprises 208 residues: Cysteine-rich protein 2 (208 aa).

The LIM zinc-binding 1 domain occupies 5 to 57 (CPKCDKTVYFAEKVSSLGKDWHKFCLKCERCSKTLTPGGHAEHDGKPFCHKPC). Position 23 is an N6-acetyllysine (lysine 23). The segment at 98–119 (AEERKASGPPKGPSRASSVTTF) is disordered. Phosphoserine is present on serine 104. The LIM zinc-binding 2 domain occupies 126–178 (CPRCSKKVYFAEKVTSLGKDWHRPCLRCERCGKTLTPGGHAEHDGQPYCHKPC). 2 positions are modified to N6-acetyllysine: lysine 138 and lysine 144.

Interacts with TGFB1I1. Widespread tissue expression; highest levels in the heart.

The polypeptide is Cysteine-rich protein 2 (CRIP2) (Homo sapiens (Human)).